The sequence spans 964 residues: Phosphoenolpyruvate carboxylase (964 aa).

Serine 11 is modified (phosphoserine). Active-site residues include histidine 172 and lysine 600.

This sequence belongs to the PEPCase type 1 family. In terms of assembly, homotetramer. Requires Mg(2+) as cofactor.

It is found in the cytoplasm. The catalysed reaction is oxaloacetate + phosphate = phosphoenolpyruvate + hydrogencarbonate. The protein operates within photosynthesis; C4 acid pathway. By light-reversible phosphorylation. Through the carboxylation of phosphoenolpyruvate (PEP) it forms oxaloacetate, a four-carbon dicarboxylic acid source for the tricarboxylic acid cycle. The sequence is that of Phosphoenolpyruvate carboxylase from Amaranthus hypochondriacus (Prince-of-Wales feather).